A 428-amino-acid polypeptide reads, in one-letter code: Adenylosuccinate synthetase (428 aa).

Residues 12–18 and 40–42 contribute to the GTP site; these read GDEGKGK and GHT. The active-site Proton acceptor is D13. Mg(2+) is bound by residues D13 and G40. IMP-binding positions include 13-16, 38-41, T130, R144, Q225, T240, and R304; these read DEGK and NAGH. The Proton donor role is filled by H41. 300 to 306 provides a ligand contact to substrate; the sequence is TTTGRPR. GTP-binding positions include R306, 332-334, and 414-416; these read KLD and SVG.

This sequence belongs to the adenylosuccinate synthetase family. Homodimer. Mg(2+) serves as cofactor.

The protein localises to the cytoplasm. The catalysed reaction is IMP + L-aspartate + GTP = N(6)-(1,2-dicarboxyethyl)-AMP + GDP + phosphate + 2 H(+). Its pathway is purine metabolism; AMP biosynthesis via de novo pathway; AMP from IMP: step 1/2. In terms of biological role, plays an important role in the de novo pathway of purine nucleotide biosynthesis. Catalyzes the first committed step in the biosynthesis of AMP from IMP. The chain is Adenylosuccinate synthetase from Caldanaerobacter subterraneus subsp. tengcongensis (strain DSM 15242 / JCM 11007 / NBRC 100824 / MB4) (Thermoanaerobacter tengcongensis).